Reading from the N-terminus, the 441-residue chain is ATP-dependent protease ATPase subunit HslU (441 aa).

ATP is bound by residues Val18, Gly60 to Glu65, Asp254, Glu319, and Arg391.

The protein belongs to the ClpX chaperone family. HslU subfamily. A double ring-shaped homohexamer of HslV is capped on each side by a ring-shaped HslU homohexamer. The assembly of the HslU/HslV complex is dependent on binding of ATP.

The protein resides in the cytoplasm. In terms of biological role, ATPase subunit of a proteasome-like degradation complex; this subunit has chaperone activity. The binding of ATP and its subsequent hydrolysis by HslU are essential for unfolding of protein substrates subsequently hydrolyzed by HslV. HslU recognizes the N-terminal part of its protein substrates and unfolds these before they are guided to HslV for hydrolysis. The sequence is that of ATP-dependent protease ATPase subunit HslU from Verminephrobacter eiseniae (strain EF01-2).